We begin with the raw amino-acid sequence, 489 residues long: Adenylosuccinate synthetase 2, chloroplastic (489 aa).

The N-terminal 45 residues, 1–45, are a transit peptide targeting the chloroplast; that stretch reads MPFSPPCLDPAAAAAASLSFLPAAAARPPAPCAVAPRSRRALRVA. GTP-binding positions include 76 to 82 and 104 to 106; these read GDEGKGK and GHT. Aspartate 77 serves as the catalytic Proton acceptor. Mg(2+) is bound by residues aspartate 77 and glycine 104. Residues 77 to 80, 102 to 105, threonine 194, arginine 208, glutamine 288, threonine 303, and arginine 367 each bind IMP; these read DEGK and NAGH. Histidine 105 functions as the Proton donor in the catalytic mechanism. Substrate is bound at residue 363–369; the sequence is TTTGRPR. GTP contacts are provided by residues arginine 369, 395 to 397, and 478 to 480; these read KLD and GVG.

This sequence belongs to the adenylosuccinate synthetase family. In terms of assembly, homodimer. It depends on Mg(2+) as a cofactor.

It localises to the plastid. Its subcellular location is the chloroplast. The enzyme catalyses IMP + L-aspartate + GTP = N(6)-(1,2-dicarboxyethyl)-AMP + GDP + phosphate + 2 H(+). It functions in the pathway purine metabolism; AMP biosynthesis via de novo pathway; AMP from IMP: step 1/2. Its function is as follows. Plays an important role in the de novo pathway and in the salvage pathway of purine nucleotide biosynthesis. Catalyzes the first committed step in the biosynthesis of AMP from IMP. The protein is Adenylosuccinate synthetase 2, chloroplastic of Oryza sativa subsp. japonica (Rice).